The primary structure comprises 593 residues: Solute carrier family 13 member 2 (593 aa).

The next 4 membrane-spanning stretches (helical) occupy residues 11–31 (YRMYLLVFLLPISLLPLPILV), 53–73 (ALPLAVTALLPLCLFPMMGIM), 86–106 (TNVLFIGGLLLAIAVEHWNLH), and 121–141 (PALLILGFMVVTAFLSMWISN). Residues 164 to 184 (SNVEEGSDNPTFELQEPSPQK) show a composition bias toward polar residues. A disordered region spans residues 164–204 (SNVEEGSDNPTFELQEPSPQKETSKVDEKDNGQAQPLPAVP). Over residues 185–194 (ETSKVDEKDN) the composition is skewed to basic and acidic residues. Helical transmembrane passes span 221–241 (GMSLCVCYSASIGGIATLTGT), 270–290 (FAFPIMVILLLLSWLWLQILF), 327–347 (PMSFAEKAVFILFVILVLLWF), 369–389 (VMVSDGSASILIGVFLFMVPS), 451–471 (LMPLQHVPPPATVFIICLLVA), 485–505 (LLLPILASMAQAICLHPLYVM), 514–534 (LAFMLPVATPPNAIVFSFGGL), and 543–563 (GIMLNIIGVLVIMLAINSWGV).

It belongs to the SLC13A/DASS transporter (TC 2.A.47) family. NADC subfamily. Abundant in kidney and small intestine.

It localises to the apical cell membrane. The catalysed reaction is succinate(out) + 3 Na(+)(out) = succinate(in) + 3 Na(+)(in). The enzyme catalyses fumarate(out) + 3 Na(+)(out) = fumarate(in) + 3 Na(+)(in). It catalyses the reaction 2-oxoglutarate(out) + 3 Na(+)(out) = 2-oxoglutarate(in) + 3 Na(+)(in). Its activity is regulated as follows. Li(+) decreases succinate transport in the presence of Na(+), by competing at one of the three cation binding sites. Low-affinity sodium-dicarboxylate cotransporter, that mediates the entry of citric acid cycle intermediates, such as succinate, citrate, fumarate and alpha-ketoglutarate (2-oxoglutarate) into the small intestine and renal proximal tubule. Transports the dicarboxylate into the cell with a probable stoichiometry of 3 Na(+) for 1 divalent dicarboxylate, rendering the process electrogenic. Citrate is transported in protonated form as a divalent anion, rather than the trivalent form which is normally found in blood. Has a critical role in renal dicarboxylate transport. The protein is Solute carrier family 13 member 2 (SLC13A2) of Oryctolagus cuniculus (Rabbit).